The primary structure comprises 851 residues: Transforming growth factor beta receptor type 3 (851 aa).

A signal peptide spans 1 to 20 (MTSHYVIAIFALMSSCLATA). The Extracellular segment spans residues 21-787 (GPEPGALCEL…IFHGLDTLTV (767 aa)). Cys52 and Cys197 are oxidised to a cystine. N-linked (GlcNAc...) asparagine glycans are attached at residues Asn141 and Asn492. The 276-residue stretch at 455-730 (KCDNEKMIVA…PKCVPPDEAC (276 aa)) folds into the ZP domain. O-linked (Xyl...) (glycosaminoglycan) serine glycans are attached at residues Ser534 and Ser545. Asn571, Asn590, and Asn697 each carry an N-linked (GlcNAc...) asparagine glycan. 3 disulfide bridges follow: Cys639-Cys705, Cys660-Cys730, and Cys710-Cys723. The interval 737–751 (IIWAMMQNKKTFTKP) is interaction with TGF-beta ligand. Residues 788–809 (MGIAFAAFVIGALLTGALWYIY) form a helical membrane-spanning segment. Residues 810 to 851 (SHTGETAGRQQVPTSPPASENSSAAHSIGSTQSTPCSSSSTA) lie on the Cytoplasmic side of the membrane. The disordered stretch occupies residues 816 to 851 (AGRQQVPTSPPASENSSAAHSIGSTQSTPCSSSSTA). Residues 817 to 834 (GRQQVPTSPPASENSSAA) are compositionally biased toward polar residues. Low complexity predominate over residues 836–851 (SIGSTQSTPCSSSSTA). The residue at position 840 (Thr840) is a Phosphothreonine.

Forms homodimers and homooligomers. Interacts with DYNLT4. Interacts with integrin ITGA5:ITGB1; this interaction promotes the internalization and trafficking of ITGA5:ITGB1 into endocytic vesicles. Interacts with TGFB1, BMP2, BMP5, BMP7 or GDF5 and inhibin A via the ligand binding domains. Interacts with ALK3/BMPR1A; this interaction results in the cell surface retention of BMPR1A. Interacts with ALK6/BMPR1B; this interaction enhances BMPR1B-mediated stimulation of the BMP signaling pathway. Interacts with the scaffolding protein beta-arrestin2/ARRB2; this interaction mediates internalization of TGFBR3 and thus regulates migration, actin cytoskeleton and activation of CDC42. As to quaternary structure, (Microbial infection) Interacts with human cytomegalovirus trimer complex composed of gH, gL, and gO; these interactions may promote HCMV cell entry in specific cell types. In terms of processing, extensively modified by glycosaminoglycan groups (GAG). Post-translationally, phosphorylated in the cytoplasmic domain by the type II receptor TGFBR2 at THR-840 to mediate recruitment of ARRB2 and subsequent internalization of TGFBR2 and TGFBR3.

It localises to the cell membrane. Its subcellular location is the secreted. The protein localises to the extracellular space. The protein resides in the extracellular matrix. In terms of biological role, cell surface receptor that regulates diverse cellular processes including cell proliferation, differentiation, migration, and apoptosis. Initiates BMP, inhibin, and TGF-beta signaling pathways by interacting with different ligands including TGFB1, BMP2, BMP5, BMP7 or GDF5. Alternatively, acts as a cell surface coreceptor for BMP ligands, serving to enhance ligand binding by differentially regulating BMPR1A/ALK3 and BMPR1B/ALK6 receptor trafficking. Promotes epithelial cell adhesion, focal adhesion formation and integrin signaling during epithelial cell spreading on fibronectin. By interacting with the scaffolding protein beta-arrestin2/ARRB2, regulates migration or actin cytoskeleton and promotes the activation of CDC42 as well as the inhibition of NF-kappa-B. In gonadotrope cells, acts as an inhibin A coreceptor and regulates follicle-stimulating hormone (FSH) levels and female fertility. Plays a role in the inhibition of directed and random cell migration in epithelial cells by altering the actin cytoskeletal organization. Participates in epithelial-mesenchymal transformation (EMT) upon binding to BMP2 or TGFB2, by activating the PAR6/SMURF1/RHOA pathway. Its function is as follows. (Microbial infection) May act as a receptor for human cytomegalovirus in different cell types by interacting with HCMV trimer composed of GO, GH and GL. This chain is Transforming growth factor beta receptor type 3, found in Homo sapiens (Human).